We begin with the raw amino-acid sequence, 158 residues long: Large ribosomal subunit protein uL11 (158 aa).

It belongs to the universal ribosomal protein uL11 family. Part of the ribosomal stalk of the 50S ribosomal subunit. Interacts with L10 and the large rRNA to form the base of the stalk. L10 forms an elongated spine to which L12 dimers bind in a sequential fashion forming a multimeric L10(L12)X complex.

Its function is as follows. Forms part of the ribosomal stalk which helps the ribosome interact with GTP-bound translation factors. This chain is Large ribosomal subunit protein uL11, found in Methanosphaerula palustris (strain ATCC BAA-1556 / DSM 19958 / E1-9c).